The primary structure comprises 241 residues: Endothelial protein C receptor (241 aa).

The N-terminal stretch at 1 to 20 (MLTKFLSLLLLLLLLGCAFC) is a signal peptide. The Extracellular portion of the chain corresponds to 21–213 (NSDGSQSLHM…GSQTGRSYTS (193 aa)). Residues N47, N64, N139, N165, and N175 are each glycosylated (N-linked (GlcNAc...) asparagine). The helical transmembrane segment at 214–234 (LVLGILMGCFIIAGVAVGIFL) threads the bilayer. At 235 to 241 (CTGGRRC) the chain is on the cytoplasmic side.

It localises to the membrane. Its function is as follows. Binds activated protein C. Enhances protein C activation by the thrombin-thrombomodulin complex; plays a role in the protein C pathway controlling blood coagulation. This is Endothelial protein C receptor (Procr) from Rattus norvegicus (Rat).